A 658-amino-acid polypeptide reads, in one-letter code: Scarecrow-like protein 28 (658 aa).

3 disordered regions span residues 43–85 (PCSS…TSGC), 96–115 (LATTRGNGEGFSWNNDNNNR), and 209–265 (PAAV…NNNR). The span at 214-228 (EASGGSSTSASSESR) shows a compositional bias: low complexity. The GRAS domain maps to 265–654 (RNDLQRDFEL…QPLYTISAWT (390 aa)). The leucine repeat I (LRI) stretch occupies residues 272 to 336 (FELVNLLTGC…VARMWPHIFH (65 aa)). The tract at residues 355–420 (LRFLNQVTPI…NPPHHVRITG (66 aa)) is VHIID. The short motif at 386 to 390 (VHIID) is the VHIID element. The segment at 430 to 462 (ETGDRLHGFAEAMNLQFEFHPVVDRLEDVRLWM) is leucine repeat II (LRII). Positions 471 to 563 (VAVNCVMQMH…EMLFGREIRN (93 aa)) are PFYRE. The segment at 566–654 (ACEGSHRQER…QPLYTISAWT (89 aa)) is SAW.

Belongs to the GRAS family. Interacts with SNRNP35 and CYP95. Expressed in roots and sepals.

The protein resides in the nucleus. Its function is as follows. Probable transcription factor involved in plant development. In Arabidopsis thaliana (Mouse-ear cress), this protein is Scarecrow-like protein 28 (SCL28).